The following is a 466-amino-acid chain: Glutamate--tRNA ligase 1 (466 aa).

A 'HIGH' region motif is present at residues 9-19; it reads PSPTGLLHIGN. Positions 238–242 match the 'KMSKS' region motif; the sequence is KLSKR. K241 contacts ATP.

The protein belongs to the class-I aminoacyl-tRNA synthetase family. Glutamate--tRNA ligase type 1 subfamily. Monomer.

It localises to the cytoplasm. It carries out the reaction tRNA(Glu) + L-glutamate + ATP = L-glutamyl-tRNA(Glu) + AMP + diphosphate. Catalyzes the attachment of glutamate to tRNA(Glu) in a two-step reaction: glutamate is first activated by ATP to form Glu-AMP and then transferred to the acceptor end of tRNA(Glu). The polypeptide is Glutamate--tRNA ligase 1 (Gluconacetobacter diazotrophicus (strain ATCC 49037 / DSM 5601 / CCUG 37298 / CIP 103539 / LMG 7603 / PAl5)).